The following is a 140-amino-acid chain: MKGFEFFDVTADAGFWAYGHDLEEVFENAALAMFEVMTDTSLVEAAEERRVEITSEDRVSLLYDWLDELLFIHDTEFILFSKFKVKIDEKDDGLHLTGTAMGEEIKEGHERRDEVKAVTFHMMEILDEDGLIKARVILDL.

Aspartate 12, aspartate 139, and leucine 140 together coordinate Ca(2+).

This sequence belongs to the archease family.

In terms of biological role, activates the tRNA-splicing ligase complex by facilitating the enzymatic turnover of catalytic subunit RtcB. Acts by promoting the guanylylation of RtcB, a key intermediate step in tRNA ligation. Can also alter the NTP specificity of RtcB such that ATP, dGTP or ITP is used efficiently. May also act as a chaperone or modulator of proteins involved in DNA or RNA processing. This Methanothermobacter thermautotrophicus (strain ATCC 29096 / DSM 1053 / JCM 10044 / NBRC 100330 / Delta H) (Methanobacterium thermoautotrophicum) protein is Protein archease.